We begin with the raw amino-acid sequence, 358 residues long: tRNA-specific 2-thiouridylase MnmA (358 aa).

Residues 7–14 (AMSGGVDS) and Leu33 each bind ATP. Catalysis depends on Cys101, which acts as the Nucleophile. Cys101 and Cys197 are oxidised to a cystine. ATP is bound at residue Gly125. Residues 147–149 (KDQ) form an interaction with tRNA region. The Cysteine persulfide intermediate role is filled by Cys197.

This sequence belongs to the MnmA/TRMU family.

It localises to the cytoplasm. It carries out the reaction S-sulfanyl-L-cysteinyl-[protein] + uridine(34) in tRNA + AH2 + ATP = 2-thiouridine(34) in tRNA + L-cysteinyl-[protein] + A + AMP + diphosphate + H(+). Its function is as follows. Catalyzes the 2-thiolation of uridine at the wobble position (U34) of tRNA, leading to the formation of s(2)U34. This chain is tRNA-specific 2-thiouridylase MnmA, found in Rickettsia typhi (strain ATCC VR-144 / Wilmington).